The chain runs to 397 residues: E3 ubiquitin-protein ligase RNF149 (397 aa).

A signal peptide spans 1 to 20 (MLRWLCLYSALCALTHGSSA). Residues 39–49 (TNSSVTGSTES) show a composition bias toward polar residues. Residues 39–60 (TNSSVTGSTESGRYGDSSPKES) form a disordered region. N-linked (GlcNAc...) asparagine glycans are attached at residues Asn-40 and Asn-140. Residues 83 to 170 (YIVPGTSAAA…PKGMEIMEPL (88 aa)) form the PA domain. Residues 196–216 (VVFVAIAFITMMIISLAWLIF) traverse the membrane as a helical segment. An N-linked (GlcNAc...) asparagine glycan is attached at Asn-231. Residues 264-305 (CAVCIENYKTKDLVRILPCKHIFHRLCIDPWLIEHRTCPMCK) form an RING-type; atypical zinc finger. The segment at 341–397 (SITQEESRSEGNNLPSSSTGSSLQQSNSVKDDAGETTALLDDPGNDNAAATHTQDSH) is disordered. Residues 351–368 (GNNLPSSSTGSSLQQSNS) show a composition bias toward low complexity. Residues 388–397 (AAATHTQDSH) are compositionally biased toward polar residues.

It localises to the membrane. It catalyses the reaction S-ubiquitinyl-[E2 ubiquitin-conjugating enzyme]-L-cysteine + [acceptor protein]-L-lysine = [E2 ubiquitin-conjugating enzyme]-L-cysteine + N(6)-ubiquitinyl-[acceptor protein]-L-lysine.. It functions in the pathway protein modification; protein ubiquitination. Functionally, E3 ubiquitin-protein ligase. Ubiquitinates BRAF, inducing its proteasomal degradation. This Xenopus laevis (African clawed frog) protein is E3 ubiquitin-protein ligase RNF149 (rnf149).